The following is a 335-amino-acid chain: Leukocyte cell-derived chemotaxin-2 homolog (335 aa).

Residues 1–20 (MHLRTLHFLILIGIFIGGQT) form the signal peptide. 2 cysteine pairs are disulfide-bonded: cysteine 28–cysteine 66 and cysteine 39–cysteine 46. Position 63 (aspartate 63) interacts with Zn(2+). N-linked (GlcNAc...) asparagine glycosylation is present at asparagine 317.

It belongs to the LECT2/MIM-1 family. Component of a multi-protein dma-1 receptor-ligand complex, which is activated upon binding of lect-2, mnr-1 and sax-7 ligands to promote the morphogenesis of dendrites which extend from the PVD neuronal body. Within the complex interacts with sax-7; the interaction is required for lect-2 dendritic localization and enhances the binding of the mnr-1 and sax-7 ligands to the dma-1 receptor-ligand complex. In terms of tissue distribution, expressed in body wall muscle cells, along the boundary of the lateral hypodermis, seam cells, processes of the nervous system including commissures, sensory dendrites in the head, and lateral nerve tracts, and motor neurons and some mechanosensory neurons such as ALM.

The protein resides in the secreted. It is found in the cell junction. It localises to the extracellular space. The protein localises to the extracellular matrix. Its subcellular location is the basement membrane. The protein resides in the cell projection. It is found in the dendrite. It localises to the perikaryon. The protein localises to the cell surface. In terms of biological role, muscle-derived dendritic guidance cue, which is required for the formation of somatosensory dendritic arbors which extend from PVD and FLP sensory neurons during development. Ligand of a multi-protein dma-1 receptor-ligand complex, which is activated upon binding of lect-2, mnr-1 and sax-7 ligands to control the growth of dendrites that extend anteriorly from the PVD neuronal cell body. Enhances the binding of the mnr-1 and sax-7 ligands to the dma-1 receptor-ligand complex. Restricts the growth of secondary PVD dendritic branches and any irregularly positioned ectopic tertiary dendritic branches that originate from secondary branches, and promotes the formation of stable higher order dendritic branches. In particular, it is required for the formation of quaternary PVD dendritic branches and promotes their innervation of body wall muscles. Promotes self-avoidance of tertiary dendritic branches of PVD sensory neurons. Not required for the growth of dendrites that extend from AIY and PVQ interneurons, DVB GABergic neurons, PLM and ALM mechanosensory neurons, AFD sensory neurons and DD/VD and DA/DB motor neurons. The chain is Leukocyte cell-derived chemotaxin-2 homolog from Caenorhabditis elegans.